We begin with the raw amino-acid sequence, 634 residues long: DNA-directed RNA polymerase subunit gamma (634 aa).

Residues Cys74, Cys76, Cys89, and Cys92 each coordinate Zn(2+). Positions 471, 473, and 475 each coordinate Mg(2+).

This sequence belongs to the RNA polymerase beta' chain family. RpoC1 subfamily. In terms of assembly, in cyanobacteria the RNAP catalytic core is composed of 2 alpha, 1 beta, 1 beta', 1 gamma and 1 omega subunit. When a sigma factor is associated with the core the holoenzyme is formed, which can initiate transcription. Requires Mg(2+) as cofactor. Zn(2+) serves as cofactor.

The catalysed reaction is RNA(n) + a ribonucleoside 5'-triphosphate = RNA(n+1) + diphosphate. DNA-dependent RNA polymerase catalyzes the transcription of DNA into RNA using the four ribonucleoside triphosphates as substrates. The sequence is that of DNA-directed RNA polymerase subunit gamma from Prochlorococcus marinus (strain AS9601).